The primary structure comprises 348 residues: MNLKEKLAELKEQGLAEIKEAKDLKKINDIRVSLLGKKGPITEVLRGMRDLSAEERPKVGQFANAIRDELTQALADKKDEIEVIKMAKKLEKETIDVTLPGVPVTTGNTHIITQIIDQIEKLFLGMGFQVVDGPEVEEDHYNFEMLNLPQDHPARDMQDTFYITEKILMRTQTSPVQARTMEKHDFSKGPLKMISPGKVYRRDTDDATHSHQFHQVEGLVIDKHITMADLKGTLQLIARTIFGEDREIRMRPSYFPFTEPSAEIDVSCFKCNGKGCSVCKYTGWIEVLGAGMVHPNVLEMAGVDSNVYGGFAFGLGPDRFAMLKYGVDDIREFYLNDVRFLSQFSQKG.

Glutamate 259 is a Mg(2+) binding site.

This sequence belongs to the class-II aminoacyl-tRNA synthetase family. Phe-tRNA synthetase alpha subunit type 1 subfamily. Tetramer of two alpha and two beta subunits. Mg(2+) serves as cofactor.

It is found in the cytoplasm. It catalyses the reaction tRNA(Phe) + L-phenylalanine + ATP = L-phenylalanyl-tRNA(Phe) + AMP + diphosphate + H(+). This is Phenylalanine--tRNA ligase alpha subunit from Ligilactobacillus salivarius (strain UCC118) (Lactobacillus salivarius).